The chain runs to 154 residues: D-aminoacyl-tRNA deacylase (154 aa).

The short motif at 142-143 (GP) is the Gly-cisPro motif, important for rejection of L-amino acids element.

The protein belongs to the DTD family. Homodimer.

It localises to the cytoplasm. It carries out the reaction glycyl-tRNA(Ala) + H2O = tRNA(Ala) + glycine + H(+). It catalyses the reaction a D-aminoacyl-tRNA + H2O = a tRNA + a D-alpha-amino acid + H(+). Functionally, an aminoacyl-tRNA editing enzyme that deacylates mischarged D-aminoacyl-tRNAs. Also deacylates mischarged glycyl-tRNA(Ala), protecting cells against glycine mischarging by AlaRS. Acts via tRNA-based rather than protein-based catalysis; rejects L-amino acids rather than detecting D-amino acids in the active site. By recycling D-aminoacyl-tRNA to D-amino acids and free tRNA molecules, this enzyme counteracts the toxicity associated with the formation of D-aminoacyl-tRNA entities in vivo and helps enforce protein L-homochirality. This is D-aminoacyl-tRNA deacylase from Polaromonas sp. (strain JS666 / ATCC BAA-500).